Consider the following 383-residue polypeptide: Podocin (383 aa).

Over residues 1-41 (MERRARSSSRESRGRGGRTPHKENKRAKAERSGGGRGRQEA) the composition is skewed to basic and acidic residues. Positions 1 to 76 (MERRARSSSR…VDEVRGSGEE (76 aa)) are disordered. Over 1–102 (MERRARSSSR…TKSSGLGACE (102 aa)) the chain is Cytoplasmic. Cys-101 carries the S-palmitoyl cysteine lipid modification. The stretch at 103 to 123 (WLLVLISLLFIIMTFPFSIWF) is an intramembrane region. Residues 124–383 (CVKVVQEYER…NPKKKDSPML (260 aa)) lie on the Cytoplasmic side of the membrane. N-linked (GlcNAc...) asparagine glycosylation occurs at Gln-287. Residues 355–383 (NRTQGSLPFPSPSKPVEPLNPKKKDSPML) form a disordered region. The span at 374-383 (NPKKKDSPML) shows a compositional bias: basic and acidic residues.

Belongs to the band 7/mec-2 family. In terms of assembly, interacts with nephrin/NPHS1 and KIRREL1. Interacts directly with CD2AP. Interacts with DDN. Post-translationally, glycosylated. As to expression, almost exclusively expressed in the podocytes of fetal and mature kidney glomeruli.

Its subcellular location is the cell membrane. The protein localises to the endoplasmic reticulum. Plays a role in the regulation of glomerular permeability, acting probably as a linker between the plasma membrane and the cytoskeleton. In Homo sapiens (Human), this protein is Podocin (NPHS2).